Here is a 483-residue protein sequence, read N- to C-terminus: Peroxisomal biogenesis factor 3 (483 aa).

The Peroxisomal segment spans residues 1–14 (MTGNRSLVQRHRKK). A helical membrane pass occupies residues 15–35 (FVVSSVLFATLFATCAITVYF). Residues 36–483 (SKRWLYKQHL…SACVYSNFGL (448 aa)) are Cytoplasmic-facing. Disordered stretches follow at residues 119-149 (GLSSGMSAMTPAPSVSAKSPQSADTTSVSET) and 230-253 (NNLPSEKADPRNSDGTIDTDTRSI). Residues 242-253 (SDGTIDTDTRSI) are compositionally biased toward polar residues.

This sequence belongs to the peroxin-3 family.

It localises to the peroxisome membrane. In terms of biological role, involved in peroxisome biosynthesis. This is Peroxisomal biogenesis factor 3 (PEX3) from Kluyveromyces lactis (strain ATCC 8585 / CBS 2359 / DSM 70799 / NBRC 1267 / NRRL Y-1140 / WM37) (Yeast).